Here is a 525-residue protein sequence, read N- to C-terminus: NGFI-A-binding protein 2 (525 aa).

The tract at residues 1–31 (MHRAPSPTAEQPPGRGDNTRRTPQPRFKASA) is disordered. Ser-6 carries the post-translational modification Phosphoserine. Residues 35–113 (ALPRTLGELQ…REWATNPGLF (79 aa)) form an NCD1 region. Residues 135–238 (GTRKGSMSNG…GAGGGPDRLE (104 aa)) form a disordered region. A phosphoserine mark is found at Ser-157, Ser-159, Ser-162, and Ser-171. A compositionally biased stretch (gly residues) spans 212-234 (AGGGVSEGPGVGGVAAGGAGGGP). Residues 267 to 356 (LLKLNKKLAR…SRQVARESTY (90 aa)) form an NCD2 region. The interval 353–384 (ESTYLSSLKGSRLHSEELGGPPLKKLKQEVGE) is necessary for nuclear localization. Lys-379 participates in a covalent cross-link: Glycyl lysine isopeptide (Lys-Gly) (interchain with G-Cter in SUMO1). Residues 381 to 416 (EVGEQSHNEIQQPPPGPESYAPPYRPSLEEDSASLS) are disordered. Ser-479 carries the post-translational modification Phosphoserine. Residues 501–525 (APGPHPALVEGRRSSVKVEAEASRQ) form a disordered region. Over residues 510 to 525 (EGRRSSVKVEAEASRQ) the composition is skewed to basic and acidic residues. A Glycyl lysine isopeptide (Lys-Gly) (interchain with G-Cter in SUMO1); alternate cross-link involves residue Lys-517. Lys-517 participates in a covalent cross-link: Glycyl lysine isopeptide (Lys-Gly) (interchain with G-Cter in SUMO2); alternate.

The protein belongs to the NAB family. As to quaternary structure, homomultimers may associate with EGR1 bound to DNA. Post-translationally, sumoylation by EGR2 represses EGR2 transcriptional activity in hindbrain. In terms of tissue distribution, highly expressed in brain and thymus, and at lower levels in spleen, kidney, heart and testis. Isoform 1 is predominantly expressed in testis, whereas isoform 3 is more abundant in thymus.

Its subcellular location is the nucleus. Functionally, acts as a transcriptional repressor for zinc finger transcription factors EGR1 and EGR2. Isoform 2 lacks repression ability. This chain is NGFI-A-binding protein 2 (Nab2), found in Mus musculus (Mouse).